Reading from the N-terminus, the 196-residue chain is Segregation and condensation protein B (196 aa).

Belongs to the ScpB family. In terms of assembly, homodimer. Homodimerization may be required to stabilize the binding of ScpA to the Smc head domains. Component of a cohesin-like complex composed of ScpA, ScpB and the Smc homodimer, in which ScpA and ScpB bind to the head domain of Smc. The presence of the three proteins is required for the association of the complex with DNA.

It localises to the cytoplasm. Its function is as follows. Participates in chromosomal partition during cell division. May act via the formation of a condensin-like complex containing Smc and ScpA that pull DNA away from mid-cell into both cell halves. The sequence is that of Segregation and condensation protein B from Pediococcus pentosaceus (strain ATCC 25745 / CCUG 21536 / LMG 10740 / 183-1w).